Consider the following 376-residue polypeptide: Carboxylic ester hydrolase LipN (376 aa).

Active-site residues include Ser-216, Asp-316, and His-346.

The protein belongs to the 'GDXG' lipolytic enzyme family.

Its subcellular location is the cytoplasm. It carries out the reaction a carboxylic ester + H2O = an alcohol + a carboxylate + H(+). The catalysed reaction is an acetyl ester + H2O = an aliphatic alcohol + acetate + H(+). The enzyme catalyses a butanoate ester + H2O = an aliphatic alcohol + butanoate + H(+). It catalyses the reaction an octanoate ester + H2O = an aliphatic alcohol + octanoate + H(+). It carries out the reaction decanoate ester + H2O = decanoate + an aliphatic alcohol + H(+). The catalysed reaction is a dodecanoate ester + H2O = an aliphatic alcohol + dodecanoate + H(+). The enzyme catalyses 1,2,3-tributanoylglycerol + H2O = dibutanoylglycerol + butanoate + H(+). It catalyses the reaction 4-acetoxyphenol + H2O = hydroquinone + acetate + H(+). Completely inhibited by tetrahydrolipstatin (THL), RHC-80267 and N-bromosuccinimide. Non specific carboxylic ester hydrolase. Hydrolyzes various pNP-esters, with a preference for short carbon chain substrates. Can also hydrolyze tributyrin to di- and monobutyrin and 4-hydroxyphenylacetate to hydroquinone. In Mycobacterium tuberculosis (strain ATCC 25618 / H37Rv), this protein is Carboxylic ester hydrolase LipN.